We begin with the raw amino-acid sequence, 534 residues long: Zinc finger protein 703-A (534 aa).

Disordered stretches follow at residues 1–35 (MNCS…THPV), 90–251 (SQIG…VAPV), and 300–320 (QLPG…LTGA). Composition is skewed to low complexity over residues 15-34 (QSSS…PTHP), 115-124 (RSSSLKLGES), and 146-155 (GSSAGGSADK). Residues 173–182 (SPSSRVSSPG) are compositionally biased toward polar residues. The span at 185–200 (CDSKNNESQEKKEPEA) shows a compositional bias: basic and acidic residues. Residues 204–217 (SLETSQANPTLTRA) are compositionally biased toward polar residues. Low complexity predominate over residues 218-229 (SISNSSAESSQS). The segment covering 230–239 (GDVTPSSKSD) has biased composition (polar residues). The C2H2-type zinc-finger motif lies at 406-434 (HICNWVSASGPCDKRFATSEELLAHLRTH).

This sequence belongs to the Elbow/Noc family.

Its subcellular location is the nucleus. It is found in the cytoplasm. Its function is as follows. Transcriptional corepressor which does not bind directly to DNA and may regulate transcription through recruitment of histone deacetylases to gene promoters. Regulates cell adhesion, migration and proliferation. Involved in specification of the lateral neural plate border (NPB). May be required for segmental gene expression during hindbrain development. This Xenopus laevis (African clawed frog) protein is Zinc finger protein 703-A (znf703-a).